A 355-amino-acid polypeptide reads, in one-letter code: dTDP-D-glucose 4,6-dehydratase (355 aa).

A substrate-binding site is contributed by Thr142. The active-site Proton donor is the Asp143. Residues Glu144 and Tyr166 each act as proton acceptor in the active site.

It belongs to the NAD(P)-dependent epimerase/dehydratase family. dTDP-glucose dehydratase subfamily. NAD(+) serves as cofactor.

The enzyme catalyses dTDP-alpha-D-glucose = dTDP-4-dehydro-6-deoxy-alpha-D-glucose + H2O. In Mus musculus (Mouse), this protein is dTDP-D-glucose 4,6-dehydratase (Tgds).